A 616-amino-acid chain; its full sequence is Dihydroxy-acid dehydratase (616 aa).

Position 81 (Asp81) interacts with Mg(2+). Residue Cys122 participates in [2Fe-2S] cluster binding. Positions 123 and 124 each coordinate Mg(2+). Lys124 is subject to N6-carboxylysine. [2Fe-2S] cluster is bound at residue Cys195. Glu491 provides a ligand contact to Mg(2+). Ser517 (proton acceptor) is an active-site residue.

It belongs to the IlvD/Edd family. In terms of assembly, homodimer. [2Fe-2S] cluster is required as a cofactor. Mg(2+) serves as cofactor.

The enzyme catalyses (2R)-2,3-dihydroxy-3-methylbutanoate = 3-methyl-2-oxobutanoate + H2O. It carries out the reaction (2R,3R)-2,3-dihydroxy-3-methylpentanoate = (S)-3-methyl-2-oxopentanoate + H2O. Its pathway is amino-acid biosynthesis; L-isoleucine biosynthesis; L-isoleucine from 2-oxobutanoate: step 3/4. It functions in the pathway amino-acid biosynthesis; L-valine biosynthesis; L-valine from pyruvate: step 3/4. Its function is as follows. Functions in the biosynthesis of branched-chain amino acids. Catalyzes the dehydration of (2R,3R)-2,3-dihydroxy-3-methylpentanoate (2,3-dihydroxy-3-methylvalerate) into 2-oxo-3-methylpentanoate (2-oxo-3-methylvalerate) and of (2R)-2,3-dihydroxy-3-methylbutanoate (2,3-dihydroxyisovalerate) into 2-oxo-3-methylbutanoate (2-oxoisovalerate), the penultimate precursor to L-isoleucine and L-valine, respectively. In Pectobacterium atrosepticum (strain SCRI 1043 / ATCC BAA-672) (Erwinia carotovora subsp. atroseptica), this protein is Dihydroxy-acid dehydratase.